The following is an 837-amino-acid chain: Periplasmic nitrate reductase (837 aa).

A signal peptide (tat-type signal) is located at residues 1–32 (MTSPKLDRRQMLKLEAAAIAAAAAGLPVPALA). One can recognise a 4Fe-4S Mo/W bis-MGD-type domain in the interval 44–100 (LKWDKAACRFCGTGCSVMVATKENRVVATHGDIKAEVNRGLNCVKGYFLSKIMYGHD). Residues cysteine 51, cysteine 54, cysteine 58, and cysteine 86 each coordinate [4Fe-4S] cluster. Residues lysine 88, glutamine 155, asparagine 180, cysteine 184, 217–224 (WGSNMAEM), 248–252 (STFEH), 267–269 (QTD), methionine 378, glutamine 382, asparagine 488, 514–515 (SD), lysine 537, aspartate 564, and 724–733 (TGRVLEHWHS) each bind Mo-bis(molybdopterin guanine dinucleotide). A substrate-binding site is contributed by tryptophan 800. 2 residues coordinate Mo-bis(molybdopterin guanine dinucleotide): asparagine 808 and lysine 825.

Belongs to the prokaryotic molybdopterin-containing oxidoreductase family. NasA/NapA/NarB subfamily. In terms of assembly, component of the periplasmic nitrate reductase NapAB complex composed of NapA and NapB. [4Fe-4S] cluster serves as cofactor. The cofactor is Mo-bis(molybdopterin guanine dinucleotide). Post-translationally, predicted to be exported by the Tat system. The position of the signal peptide cleavage has not been experimentally proven.

The protein localises to the periplasm. It catalyses the reaction 2 Fe(II)-[cytochrome] + nitrate + 2 H(+) = 2 Fe(III)-[cytochrome] + nitrite + H2O. In terms of biological role, catalytic subunit of the periplasmic nitrate reductase complex NapAB. Receives electrons from NapB and catalyzes the reduction of nitrate to nitrite. The chain is Periplasmic nitrate reductase from Bradyrhizobium diazoefficiens (strain JCM 10833 / BCRC 13528 / IAM 13628 / NBRC 14792 / USDA 110).